A 143-amino-acid chain; its full sequence is Peptide methionine sulfoxide reductase MsrB (143 aa).

Positions 16–139 constitute a MsrB domain; that stretch reads DAELRRRLTP…NSAALNFESR (124 aa). Residues Cys55, Cys58, Cys104, and Cys107 each coordinate Zn(2+). The Nucleophile role is filled by Cys128.

The protein belongs to the MsrB Met sulfoxide reductase family. It depends on Zn(2+) as a cofactor.

It carries out the reaction L-methionyl-[protein] + [thioredoxin]-disulfide + H2O = L-methionyl-(R)-S-oxide-[protein] + [thioredoxin]-dithiol. The sequence is that of Peptide methionine sulfoxide reductase MsrB from Burkholderia multivorans (strain ATCC 17616 / 249).